Consider the following 480-residue polypeptide: Pre-glycoprotein polyprotein GP complex (480 aa).

G2 carries the N-myristoyl glycine; by host lipid modification. The Extracellular portion of the chain corresponds to 2 to 17; that stretch reads GQLVSFFQEIPVFFQE. Residues 18–33 form a helical membrane-spanning segment; sequence ALNIALAVVTLLAIVK. Residues 34-58 lie on the Cytoplasmic side of the membrane; that stretch reads GVLNLWKSGLFQLLMFLILAGRSCS. Zn(2+) is bound at residue C57. At 59–419 the chain is on the extracellular side; sequence FRIGYHTSFE…QGRTPLTLVD (361 aa). 4 disulfide bridges follow: C85–C221, C266–C279, C288–C297, and C351–C372. 3 N-linked (GlcNAc...) asparagine; by host glycosylation sites follow: N88, N174, and N214. N-linked (GlcNAc...) asparagine; by host glycosylation is found at N352, N360, N377, and N382. A helical transmembrane segment spans residues 420–440; sequence LCFWSAVFYTTTLFLHLVGFP. Over 441–480 the chain is Cytoplasmic; that stretch reads THRHISGEPCPLPHRLNRHGACNCGRFKRLKKPLVWYKHH. Zn(2+) contacts are provided by H442, H444, C450, H454, C462, C464, and H480.

This sequence belongs to the arenaviridae GPC protein family. Interacts with glycoprotein G2. Part of the GP complex (GP-C) together with glycoprotein G1 and glycoprotein G2. The GP-complex interacts with protein Z, which interacts with ribonucleocapsid; these interactions may induce virion budding. As to quaternary structure, homotrimer; disulfide-linked. In pre-fusion state, G1 homotrimers bind G2 homotrimers via ionic interactions. Part of the GP complex (GP-C) together with glycoprotein G2 and the stable signal peptide. The GP-complex interacts with protein Z, which interacts with ribonucleocapsid; these interactions may induce virion budding. In terms of assembly, homotrimer. Interacts with the stable signal peptide. In pre-fusion state, G2 homotrimers bind G1 homotrimers via ionic interactions. Part of the GP complex (GP-C) together with glycoprotein G1 and the stable signal peptide. Acidification in the endosome triggers rearrangements, which ultimately leads to a 6 helix bundle formed by the two heptad repeat domains (HR1 and HR2) in post-fusion state. The GP-complex interacts with protein Z, which interacts with ribonucleocapsid; these interactions may induce virion budding. Specific enzymatic cleavages in vivo yield mature proteins. GP-C polyprotein is cleaved in the endoplasmic reticulum by the host protease MBTPS1. Only cleaved glycoprotein is incorporated into virions. Post-translationally, the SSP remains stably associated with the GP complex following cleavage by signal peptidase and plays crucial roles in the trafficking of GP through the secretory pathway. In terms of processing, myristoylation is necessary for GP2-mediated fusion activity.

The protein resides in the virion membrane. It localises to the host endoplasmic reticulum membrane. It is found in the host Golgi apparatus membrane. The protein localises to the host cell membrane. In terms of biological role, functions as a cleaved signal peptide that is retained as the third component of the GP complex (GP-C). Helps to stabilize the spike complex in its native conformation. The SSP is required for efficient glycoprotein expression, post-translational maturation cleavage of G1 and G2, glycoprotein transport to the cell surface plasma membrane, formation of infectious virus particles, and acid pH-dependent glycoprotein-mediated cell fusion. Its function is as follows. Forms the virion spikes together with glycoprotein G2. The glycoprotein spike trimers are connected to the underlying matrix. Interacts with the host receptor leading to virus endocytosis. Functionally, forms the virion spikes together with glycoprotein G1. The glycoprotein spike trimers are connected to the underlying matrix. Class I viral fusion protein that directs fusion of viral and host endosomal membranes, leading to delivery of the nucleocapsid into the cytoplasm. Membrane fusion is mediated by irreversible conformational changes induced by acidification. This Cupixi mammarenavirus (isolate Rat/Brasil/BeAn 119303/1970) (CPXV) protein is Pre-glycoprotein polyprotein GP complex.